The primary structure comprises 411 residues: Serine--tRNA ligase (411 aa).

Residue 226-228 (TSE) coordinates L-serine. Residue 257 to 259 (RKE) coordinates ATP. L-serine is bound at residue E280. Residue 344 to 347 (EISS) coordinates ATP. Residue S379 participates in L-serine binding.

This sequence belongs to the class-II aminoacyl-tRNA synthetase family. Type-1 seryl-tRNA synthetase subfamily. As to quaternary structure, homodimer. The tRNA molecule binds across the dimer.

The protein resides in the cytoplasm. It carries out the reaction tRNA(Ser) + L-serine + ATP = L-seryl-tRNA(Ser) + AMP + diphosphate + H(+). The enzyme catalyses tRNA(Sec) + L-serine + ATP = L-seryl-tRNA(Sec) + AMP + diphosphate + H(+). Its pathway is aminoacyl-tRNA biosynthesis; selenocysteinyl-tRNA(Sec) biosynthesis; L-seryl-tRNA(Sec) from L-serine and tRNA(Sec): step 1/1. Its function is as follows. Catalyzes the attachment of serine to tRNA(Ser). Is also able to aminoacylate tRNA(Sec) with serine, to form the misacylated tRNA L-seryl-tRNA(Sec), which will be further converted into selenocysteinyl-tRNA(Sec). In Campylobacter jejuni subsp. jejuni serotype O:2 (strain ATCC 700819 / NCTC 11168), this protein is Serine--tRNA ligase.